The chain runs to 260 residues: Transcription factor MYB4 (260 aa).

HTH myb-type domains are found at residues 12–64 (AVEV…LNYL) and 65–119 (RPGI…SKRS). DNA-binding regions (H-T-H motif) lie at residues 40–64 (WRML…LNYL) and 92–115 (WSII…NTHL).

The protein resides in the nucleus. Functionally, transcription activator involved in the spatiotemporal regulation of flavonoid biosynthesis specifically in the corms of Montbretia. Activates the promoters of enzymes involved in the biosynthesis of the flavonol myricetin and the flavonol-glycoside montbretin A (MbA). MbA is a potent inhibitor of human pancreatic alpha-amylase and is being developed as drug candidate to treat type-2 diabetes. The chain is Transcription factor MYB4 from Crocosmia x crocosmiiflora (Montbretia).